A 267-amino-acid chain; its full sequence is Transcription factor HES-1 (267 aa).

The segment at 1–45 (MPADLMEKNSSSPVAATPASMSNTPDKPKTASEHRKSSKPIMEKR) is disordered. Over residues 8-25 (KNSSSPVAATPASMSNTP) the composition is skewed to polar residues. Over residues 26-35 (DKPKTASEHR) the composition is skewed to basic and acidic residues. The region spanning 34–91 (HRKSSKPIMEKRRRARINESLGQLKTLILDALKKDSSRHSKLEKADILEMTVKHLRNL) is the bHLH domain. Positions 110-143 (YRAGFSECMNEVTRFLSTCEGVNTDVRTRLLGHL) constitute an Orange domain. The short motif at 264 to 267 (WRPW) is the WRPW motif element.

Transcription repression requires formation of a complex with a corepressor protein of the Groucho/TLE family. Interacts with the bHLH protein hes2, and binds DNA in the form of a heterodimer with the bHLH protein hey1/hrt1. Interacts with the bHLH protein hes6; this interaction may inhibit the transcriptional repressor activity.

The protein resides in the nucleus. Functionally, transcriptional repressor of a subset of early mesodermal genes including myod1 and t/bra. Binds DNA on N-box motifs: 5'-CACNAG-3'. Acts as a negative regulator of myogenesis, mediating Notch signaling to repress expression of myod1. In Xenopus tropicalis (Western clawed frog), this protein is Transcription factor HES-1.